The primary structure comprises 507 residues: Nuclear distribution protein PAC1 (507 aa).

Positions 72 to 98 form a coiled coil; it reads STVLRLQRKIMDLTDEVSNLKTIIEAK. WD repeat units follow at residues 125–164, 170–222, 225–265, 268–312, 315–389, 410–449, and 474–507; these read QTHQSVNTVAVHPYLPLIMAGCSDGTLSVWNIANDDPSIP, AHSR…QIRI, GHDH…CTRT, GHSD…GLCL, GHSH…VRPN, GHQSWVKTLQVHPNGRFIFSAGDDKSIRVWDLSTLATGGR, and PKDTTNEDILQDIESRMRCVFVSGGTDNTVRLWS.

It belongs to the WD repeat LIS1/nudF family. In terms of assembly, self-associates. Interacts with NDL1 and dynein.

It is found in the cytoplasm. The protein localises to the cytoskeleton. The protein resides in the spindle pole. Positively regulates the activity of the minus-end directed microtubule motor protein dynein. Plays a central role in positioning the mitotic spindle at the bud neck during cell division. Targets cytoplasmic dynein to microtubule plus ends, thereby promoting dynein-mediated microtubule sliding along the bud cortex and consequently the movement of the mitotic spindle to the bud neck. The sequence is that of Nuclear distribution protein PAC1 from Meyerozyma guilliermondii (strain ATCC 6260 / CBS 566 / DSM 6381 / JCM 1539 / NBRC 10279 / NRRL Y-324) (Yeast).